The chain runs to 69 residues: DNA gyrase inhibitor YacG (69 aa).

The Zn(2+) site is built by C13, C16, C32, and C36.

Belongs to the DNA gyrase inhibitor YacG family. Interacts with GyrB. Zn(2+) serves as cofactor.

In terms of biological role, inhibits all the catalytic activities of DNA gyrase by preventing its interaction with DNA. Acts by binding directly to the C-terminal domain of GyrB, which probably disrupts DNA binding by the gyrase. In Neisseria meningitidis serogroup C / serotype 2a (strain ATCC 700532 / DSM 15464 / FAM18), this protein is DNA gyrase inhibitor YacG.